A 357-amino-acid chain; its full sequence is Uroporphyrinogen decarboxylase (357 aa).

Residues 27–31 (RQAGR), aspartate 77, tyrosine 154, threonine 209, and histidine 327 contribute to the substrate site.

Belongs to the uroporphyrinogen decarboxylase family. In terms of assembly, homodimer.

It is found in the cytoplasm. The enzyme catalyses uroporphyrinogen III + 4 H(+) = coproporphyrinogen III + 4 CO2. The protein operates within porphyrin-containing compound metabolism; protoporphyrin-IX biosynthesis; coproporphyrinogen-III from 5-aminolevulinate: step 4/4. Its function is as follows. Catalyzes the decarboxylation of four acetate groups of uroporphyrinogen-III to yield coproporphyrinogen-III. The chain is Uroporphyrinogen decarboxylase from Proteus mirabilis (strain HI4320).